Consider the following 344-residue polypeptide: uncharacterized protein (344 aa).

This is an uncharacterized protein from Caenorhabditis elegans.